We begin with the raw amino-acid sequence, 156 residues long: Small ribosomal subunit protein uS7 (156 aa).

The protein belongs to the universal ribosomal protein uS7 family. In terms of assembly, part of the 30S ribosomal subunit. Contacts proteins S9 and S11.

Its function is as follows. One of the primary rRNA binding proteins, it binds directly to 16S rRNA where it nucleates assembly of the head domain of the 30S subunit. Is located at the subunit interface close to the decoding center, probably blocks exit of the E-site tRNA. The polypeptide is Small ribosomal subunit protein uS7 (Lactobacillus helveticus (strain DPC 4571)).